The following is a 244-amino-acid chain: MAMTGRARSMGFSILQKALSSAQRSNAHRSILCPTLSNSELLRNYATASASKEQKIKVPLTMYGVSGNYASALYLAAVKSNTLEKVESELYDLVEASKKSPTFSQFMRDPSVPVDTRVNAIKEICAQAKFGDTTQNFLLILAENGRLKHIDRIVKRFKELTMAHRGEVKATVTTVIPLPADEEKELKATLQEMVGQGKSVQIEQKIDPTILGGLVVEFGQKVFDMSIRTRARQMERFLREPLNF.

A mitochondrion-targeting transit peptide spans 1–45 (MAMTGRARSMGFSILQKALSSAQRSNAHRSILCPTLSNSELLRNY).

The protein belongs to the ATPase delta chain family. In terms of assembly, F-type ATPases have 2 components, CF(1) - the catalytic core - and CF(0) - the membrane proton channel. CF(1) has five subunits: alpha(3), beta(3), gamma(1), delta(1), epsilon(1). CF(0) has three main subunits: a, b and c.

The protein localises to the mitochondrion. Its subcellular location is the mitochondrion inner membrane. Mitochondrial membrane ATP synthase (F(1)F(0) ATP synthase or Complex V) produces ATP from ADP in the presence of a proton gradient across the membrane which is generated by electron transport complexes of the respiratory chain. F-type ATPases consist of two structural domains, F(1) - containing the extramembraneous catalytic core and F(0) - containing the membrane proton channel, linked together by a central stalk and a peripheral stalk. During catalysis, ATP synthesis in the catalytic domain of F(1) is coupled via a rotary mechanism of the central stalk subunits to proton translocation. Part of the complex F(0) domain and the peripheric stalk, which acts as a stator to hold the catalytic alpha(3)beta(3) subcomplex and subunit a/ATP6 static relative to the rotary elements. This is ATP synthase subunit O, mitochondrial from Ipomoea batatas (Sweet potato).